Reading from the N-terminus, the 327-residue chain is Putative HTH-type transcriptional regulatory protein MmarC6_0210 (327 aa).

In terms of domain architecture, HTH cro/C1-type spans 128-183 (LRETREKLKISVGELAEISRVSRKTIYKYEQNEANPSAEVAIKIEEYLDVPLIKGI). Positions 139–158 (VGELAEISRVSRKTIYKYEQ) form a DNA-binding region, H-T-H motif.

The protein is Putative HTH-type transcriptional regulatory protein MmarC6_0210 of Methanococcus maripaludis (strain C6 / ATCC BAA-1332).